The primary structure comprises 423 residues: MAMVVSSWRDPQDDVAGGNPGGPNPAAQAARGGGGGAGEQQQQAGSGAPHTPQTPGQPGAPATPGTAGDKGQGPPGSGQSQQHIECVVCGDKSSGKHYGQFTCEGCKSFFKRSVRRNLTYTCRANRNCPIDQHHRNQCQYCRLKKCLKVGMRREAVQRGRMPPTQPNPGQYALTNGDPLNGHCYLSGYISLLLRAEPYPTSRYGSQCMQPNNIMGIENICELAARLLFSAVEWARNIPFFPDLQITDQVSLLRLTWSELFVLNAAQCSMPLHVAPLLAAAGLHASPMSADRVVAFMDHIRIFQEQVEKLKALHVDSAEYSCLKAIVLFTSDACGLSDAAHIESLQEKSQCALEEYVRSQYPNQPSRFGKLLLRLPSLRTVSSSVIEQLFFVRLVGKTPIETLIRDMLLSGSSFNWPYMSIQCS.

A disordered region spans residues 1–81 (MAMVVSSWRD…QGPPGSGQSQ (81 aa)). A compositionally biased stretch (low complexity) spans 39–67 (EQQQQAGSGAPHTPQTPGQPGAPATPGTA). Positions 83–158 (HIECVVCGDK…VGMRREAVQR (76 aa)) form a DNA-binding region, nuclear receptor. 2 consecutive NR C4-type zinc fingers follow at residues 86–106 (CVVC…CEGC) and 122–146 (CRAN…LKKC). One can recognise an NR LBD domain in the interval 184–410 (YLSGYISLLL…TLIRDMLLSG (227 aa)).

This sequence belongs to the nuclear hormone receptor family. NR2 subfamily. In terms of assembly, binds DNA as dimer; homodimer and probable heterodimer with NR2F6. Interacts with GTF2B; this interaction is direct. Interacts with COPS2.

It localises to the nucleus. Functionally, coup (chicken ovalbumin upstream promoter) transcription factor binds to the ovalbumin promoter and, in conjunction with another protein (S300-II) stimulates initiation of transcription. Binds to both direct repeats and palindromes of the 5'-AGGTCA-3' motif. Represses transcriptional activity of LHCG. The polypeptide is COUP transcription factor 1 (NR2F1) (Homo sapiens (Human)).